We begin with the raw amino-acid sequence, 205 residues long: MSEEVKNSVETEENKASKDNATQAPNPTENHNTAQETEKAENSEKTESATQENESLDKLKKDVTNYREQLLRTVADFENLKKQKEREVASVRKFADESLIKELLPVLDDIERVLVNASKFLQASPEAQSYVDGVKLIQQNMMKVFEARGLKRIEAVGTPFDVHLHEALSQMEKEGAEPDTVIQEFAPGYTLNDKVVRHSKVIVSK.

The span at 1-18 shows a compositional bias: basic and acidic residues; the sequence is MSEEVKNSVETEENKASK. The tract at residues 1 to 60 is disordered; it reads MSEEVKNSVETEENKASKDNATQAPNPTENHNTAQETEKAENSEKTESATQENESLDKLK. Over residues 19–35 the composition is skewed to polar residues; that stretch reads DNATQAPNPTENHNTAQ. Basic and acidic residues predominate over residues 36–47; that stretch reads ETEKAENSEKTE.

Belongs to the GrpE family. As to quaternary structure, homodimer.

It localises to the cytoplasm. Participates actively in the response to hyperosmotic and heat shock by preventing the aggregation of stress-denatured proteins, in association with DnaK and GrpE. It is the nucleotide exchange factor for DnaK and may function as a thermosensor. Unfolded proteins bind initially to DnaJ; upon interaction with the DnaJ-bound protein, DnaK hydrolyzes its bound ATP, resulting in the formation of a stable complex. GrpE releases ADP from DnaK; ATP binding to DnaK triggers the release of the substrate protein, thus completing the reaction cycle. Several rounds of ATP-dependent interactions between DnaJ, DnaK and GrpE are required for fully efficient folding. This chain is Protein GrpE, found in Chloroherpeton thalassium (strain ATCC 35110 / GB-78).